The following is a 95-amino-acid chain: Non-specific lipid-transfer protein (95 aa).

Disulfide bonds link Cys4–Cys52, Cys14–Cys29, and Cys50–Cys90.

It belongs to the plant LTP family. As to expression, seeds.

Plant non-specific lipid-transfer proteins transfer phospholipids as well as galactolipids across membranes. May play a role in wax or cutin deposition in the cell walls of expanding epidermal cells and certain secretory tissues. The sequence is that of Non-specific lipid-transfer protein from Eleusine coracana (Indian finger millet).